We begin with the raw amino-acid sequence, 77 residues long: MLEGAKSMGAGAATNASAGAAIGIGNVLSSSIHSVARNPSLAKQLFGYAILGFALTEANASFAPMMAFLISFVFQVR.

Helical transmembrane passes span 8–28 (MGAG…GNVL) and 45–72 (LFGY…LISF).

It belongs to the ATPase C chain family. As to quaternary structure, F-type ATPases have 2 components, CF(1) - the catalytic core - and CF(0) - the membrane proton channel. CF(1) has five subunits: alpha(3), beta(3), gamma(1), delta(1), epsilon(1). CF(0) has three main subunits: a, b and c.

The protein localises to the mitochondrion membrane. In terms of biological role, this protein is one of the chains of the nonenzymatic membrane component (F0) of mitochondrial ATPase. In Petunia sp. (Petunia), this protein is ATP synthase subunit 9, mitochondrial (ATP9).